The primary structure comprises 440 residues: Trigger factor (440 aa).

The PPIase FKBP-type domain maps to 162-247 (GDRVTFDFTG…LKKIEKFQLP (86 aa)).

This sequence belongs to the FKBP-type PPIase family. Tig subfamily.

The protein resides in the cytoplasm. The enzyme catalyses [protein]-peptidylproline (omega=180) = [protein]-peptidylproline (omega=0). Its function is as follows. Involved in protein export. Acts as a chaperone by maintaining the newly synthesized protein in an open conformation. Functions as a peptidyl-prolyl cis-trans isomerase. This is Trigger factor from Hamiltonella defensa subsp. Acyrthosiphon pisum (strain 5AT).